A 624-amino-acid polypeptide reads, in one-letter code: (-)-beta-phellandrene synthase 1, chloroplastic (624 aa).

A chloroplast-targeting transit peptide spans 1–48 (MAIVSSVPLASKSCLHKSLISSIHKLKPFCRTIPTLGMSRPGKYVMPS). Residues D375, D379, and D527 each coordinate Mg(2+). Residues 375 to 379 (DDMYD) carry the DDXXD motif motif.

Belongs to the terpene synthase family. Tpsd subfamily. The cofactor is Mg(2+). Mn(2+) serves as cofactor.

It localises to the plastid. Its subcellular location is the chloroplast. The enzyme catalyses (2E)-geranyl diphosphate = (-)-beta-phellandrene + diphosphate. Its pathway is terpene metabolism; oleoresin biosynthesis. Functionally, terpene synthase (TPS) involved in the biosynthesis of monoterpene natural products included in conifer oleoresin secretions and volatile emissions; these compounds contribute to biotic and abiotic stress defense against herbivores and pathogens. Catalyzes the conversion of (2E)-geranyl diphosphate (GPP) to (-)-beta-phellandrene. The chain is (-)-beta-phellandrene synthase 1, chloroplastic from Picea sitchensis (Sitka spruce).